We begin with the raw amino-acid sequence, 427 residues long: Inward rectifier potassium channel 2 (427 aa).

At 1 to 81 the chain is on the cytoplasmic side; it reads MGSVRTNRYS…IFTTCVDIRW (81 aa). Cys-76 is subject to S-nitrosocysteine. Residues 82–106 form a helical membrane-spanning segment; sequence RWMLVIFCLAFVLSWLFFGCVFWLI. Residues 107-128 are Extracellular-facing; it reads ALLHGDLDASKESKACVSEVNS. Residues 129 to 140 constitute an intramembrane region (helical; Pore-forming); the sequence is FTAAFLFSIETQ. The pore-forming intramembrane region spans 141–147; that stretch reads TTIGYGF. The short motif at 142–147 is the Selectivity filter element; the sequence is TIGYGF. The Extracellular portion of the chain corresponds to 148 to 156; that stretch reads RCVTDECPV. The helical transmembrane segment at 157 to 178 threads the bilayer; the sequence is AVFMVVFQSIVGCIIDAFIIGA. The Cytoplasmic portion of the chain corresponds to 179 to 427; the sequence is VMAKMAKPKK…PRPLRRESEI (249 aa). Residues 181 to 208 are polyphosphoinositide (PIP2)-binding; the sequence is AKMAKPKKRNETLVFSHNAVIAMRDGKL. The interval 384–427 is disordered; sequence SKEEDDSENGVPESTSTDTPPDIDLHNQASVPLEPRPLRRESEI. Residues 425–427 carry the PDZ-binding motif; it reads SEI.

The protein belongs to the inward rectifier-type potassium channel (TC 1.A.2.1) family. KCNJ2 subfamily. As to quaternary structure, homotetramer. Homomultimeric and heteromultimeric association with KCNJ4/Kir2.3. Can form heteromeric channels with Kir2.6/KCNJ18. Associates, via its PDZ-recognition domain, with a complex containing LIN7A, LIN7B, LIN7C, DLG1, CASK and APBA1. Post-translationally, S-nitrosylation increases the open probability and inward rectifying currents.

The protein localises to the cell membrane. Its subcellular location is the sarcolemma. The protein resides in the T-tubule. The catalysed reaction is K(+)(in) = K(+)(out). With respect to regulation, activated by phosphatidylinositol 4,5 biphosphate (PtdIns(4,5)P2). Inward rectifier potassium channels are characterized by a greater tendency to allow potassium to flow into the cell rather than out of it. Their voltage dependence is regulated by the concentration of extracellular potassium; as external potassium is raised, the voltage range of the channel opening shifts to more positive voltages. The inward rectification is mainly due to the blockage of outward current by internal magnesium. Can be blocked by extracellular barium and cesium. Probably participates in establishing action potential waveform and excitability of neuronal and muscle tissues. This chain is Inward rectifier potassium channel 2 (KCNJ2), found in Bos taurus (Bovine).